Here is a 156-residue protein sequence, read N- to C-terminus: Small ribosomal subunit protein bS6 (156 aa).

A disordered region spans residues 98–156 (GHDFRDQRSHHGQAGEFRKREPQQKSKEQSEFSKEKKSFSKSVTKKTVVSKPKETKEEK). Basic and acidic residues predominate over residues 113 to 135 (EFRKREPQQKSKEQSEFSKEKKS). Low complexity predominate over residues 137–147 (SKSVTKKTVVS).

It belongs to the bacterial ribosomal protein bS6 family.

Its function is as follows. Binds together with bS18 to 16S ribosomal RNA. The sequence is that of Small ribosomal subunit protein bS6 from Mycoplasmopsis synoviae (strain 53) (Mycoplasma synoviae).